A 142-amino-acid chain; its full sequence is MFLGTHTPRLDDKGRLILPAKFRDELAGGVVITKGQERCLYVFPAPEFQRIADQLRAQPMTHKAARAYSRVFFASAHDEVPDKQGRVTIPGHLRDYAALDRDLVVIGAHTRVEIWDRVAWESYLAESEDDFADIEEGVLPGL.

SpoVT-AbrB domains follow at residues 5–47 and 76–119; these read THTP…PAPE and AHDE…DRVA.

It belongs to the MraZ family. In terms of assembly, forms oligomers.

It localises to the cytoplasm. The protein localises to the nucleoid. The polypeptide is Transcriptional regulator MraZ (Salinispora arenicola (strain CNS-205)).